The chain runs to 118 residues: Large ribosomal subunit protein bL20 (118 aa).

This sequence belongs to the bacterial ribosomal protein bL20 family.

In terms of biological role, binds directly to 23S ribosomal RNA and is necessary for the in vitro assembly process of the 50S ribosomal subunit. It is not involved in the protein synthesizing functions of that subunit. This Yersinia pseudotuberculosis serotype O:1b (strain IP 31758) protein is Large ribosomal subunit protein bL20.